Reading from the N-terminus, the 262-residue chain is Small ribosomal subunit protein uS2 (262 aa).

Residues 228–262 (VSNEEVAAEQNIDLDESKEATEAETTEENTSVESN) form a disordered region.

It belongs to the universal ribosomal protein uS2 family.

This is Small ribosomal subunit protein uS2 from Staphylococcus saprophyticus subsp. saprophyticus (strain ATCC 15305 / DSM 20229 / NCIMB 8711 / NCTC 7292 / S-41).